A 554-amino-acid chain; its full sequence is (+)-delta-cadinene synthase isozyme XC1 (554 aa).

Residues 1–16 (MASQVSQMPSSSPLSS) are compositionally biased toward low complexity. Residues 1–23 (MASQVSQMPSSSPLSSNKDEMRP) form a disordered region. The Mg(2+) site is built by Asp-307, Asp-311, Asp-451, and Glu-455. A DDXXD motif motif is present at residues 307–311 (DDTYD).

The protein belongs to the terpene synthase family. It depends on Mg(2+) as a cofactor.

It carries out the reaction (2E,6E)-farnesyl diphosphate = (1S,8aR)-delta-cadinene + diphosphate. It participates in secondary metabolite biosynthesis; terpenoid biosynthesis. Functionally, responsible for the cyclization of trans,trans-farnesyl diphosphate (FPP) to (+)-delta cadinene. The protein is (+)-delta-cadinene synthase isozyme XC1 of Gossypium arboreum (Tree cotton).